Here is a 390-residue protein sequence, read N- to C-terminus: Flap endonuclease 1-2 (390 aa).

An N-domain region spans residues Met1–Lys108. Asp34 contacts Mg(2+). DNA is bound at residue Arg74. Positions 90, 162, 164, 183, and 185 each coordinate Mg(2+). The segment at Gln126–Tyr254 is I-domain. Glu162 is a binding site for DNA. The DNA site is built by Gly232 and Asp234. Residue Asp234 participates in Mg(2+) binding. An interaction with PCNA region spans residues Phe348–Phe356. The disordered stretch occupies residues Thr359 to Ile390.

The protein belongs to the XPG/RAD2 endonuclease family. FEN1 subfamily. Interacts with PCNA. Three molecules of FEN1 bind to one PCNA trimer with each molecule binding to one PCNA monomer. PCNA stimulates the nuclease activity without altering cleavage specificity. Mg(2+) is required as a cofactor. Phosphorylated. Phosphorylation upon DNA damage induces relocalization to the nuclear plasma.

The protein localises to the nucleus. It localises to the nucleolus. The protein resides in the nucleoplasm. Its subcellular location is the mitochondrion. Structure-specific nuclease with 5'-flap endonuclease and 5'-3' exonuclease activities involved in DNA replication and repair. During DNA replication, cleaves the 5'-overhanging flap structure that is generated by displacement synthesis when DNA polymerase encounters the 5'-end of a downstream Okazaki fragment. It enters the flap from the 5'-end and then tracks to cleave the flap base, leaving a nick for ligation. Also involved in the long patch base excision repair (LP-BER) pathway, by cleaving within the apurinic/apyrimidinic (AP) site-terminated flap. Acts as a genome stabilization factor that prevents flaps from equilibrating into structures that lead to duplications and deletions. Also possesses 5'-3' exonuclease activity on nicked or gapped double-stranded DNA, and exhibits RNase H activity. Also involved in replication and repair of rDNA and in repairing mitochondrial DNA. In Paramecium tetraurelia, this protein is Flap endonuclease 1-2.